The following is a 148-amino-acid chain: Large ribosomal subunit protein bL9 (148 aa).

It belongs to the bacterial ribosomal protein bL9 family.

Its function is as follows. Binds to the 23S rRNA. This Bifidobacterium adolescentis (strain ATCC 15703 / DSM 20083 / NCTC 11814 / E194a) protein is Large ribosomal subunit protein bL9.